We begin with the raw amino-acid sequence, 248 residues long: 3-deoxy-manno-octulosonate cytidylyltransferase (248 aa).

It belongs to the KdsB family.

The protein localises to the cytoplasm. It carries out the reaction 3-deoxy-alpha-D-manno-oct-2-ulosonate + CTP = CMP-3-deoxy-beta-D-manno-octulosonate + diphosphate. It participates in nucleotide-sugar biosynthesis; CMP-3-deoxy-D-manno-octulosonate biosynthesis; CMP-3-deoxy-D-manno-octulosonate from 3-deoxy-D-manno-octulosonate and CTP: step 1/1. The protein operates within bacterial outer membrane biogenesis; lipopolysaccharide biosynthesis. Activates KDO (a required 8-carbon sugar) for incorporation into bacterial lipopolysaccharide in Gram-negative bacteria. In Enterobacter sp. (strain 638), this protein is 3-deoxy-manno-octulosonate cytidylyltransferase.